Here is a 713-residue protein sequence, read N- to C-terminus: Glutamine-dependent NAD(+) synthetase (713 aa).

The region spanning 4-275 (VTLATCNLNQ…IEVITATVDL (272 aa)) is the CN hydrolase domain. Glu-44 serves as the catalytic Proton acceptor; for glutaminase activity. Lys-114 (for glutaminase activity) is an active-site residue. The active-site Nucleophile; for glutaminase activity is Cys-175. Residues 324–703 (YNTPAEEIGF…QRPQLKNTVN (380 aa)) form a ligase region. 354 to 361 (PLSGGADS) lines the ATP pocket. The active site involves Ser-356.

In the C-terminal section; belongs to the NAD synthetase family.

It carries out the reaction deamido-NAD(+) + L-glutamine + ATP + H2O = L-glutamate + AMP + diphosphate + NAD(+) + H(+). It functions in the pathway cofactor biosynthesis; NAD(+) biosynthesis; NAD(+) from deamido-NAD(+) (L-Gln route): step 1/1. The sequence is that of Glutamine-dependent NAD(+) synthetase (nadsyn1) from Dictyostelium discoideum (Social amoeba).